A 155-amino-acid polypeptide reads, in one-letter code: FUN14 domain-containing protein 1 (155 aa).

Residues 1–47 (MATRNPPPQEYESDDDSYEVLDLTEYARRHHWWNRVFGHSSGPMVEK) lie on the Cytoplasmic side of the membrane. S13 and S17 each carry phosphoserine. Residue Y18 is modified to Phosphotyrosine; by SRC. A YXXL motif is present at residues 18 to 21 (YEVL). A helical membrane pass occupies residues 48 to 68 (YSVATQIVMGGVSGWCAGFLF). At 69 to 74 (QKVGKL) the chain is on the mitochondrial intermembrane side. Residues 75-95 (AATAVGGGFLLLQIASHSGYV) traverse the membrane as a helical segment. Topologically, residues 96–133 (QIDWKRVEKDVNKAKRQIKKRANKAAPEINNIIEEATE) are cytoplasmic. K119 is covalently cross-linked (Glycyl lysine isopeptide (Lys-Gly) (interchain with G-Cter in ubiquitin)). Residues 134–154 (FVKQNIVISSGFVGGFLLGLA) form a helical membrane-spanning segment. Residue S155 is a topological domain, mitochondrial intermembrane.

Belongs to the FUN14 family. In terms of assembly, interacts (via YXXL motif) with MAP1 LC3 family proteins MAP1LC3A, MAP1LC3B and GABARAP. Interacts with DNM1L/DPR1. Interacts with GPX4. Phosphorylation at Ser-13 by CK2 and at Tyr-18 by SRC inhibits activation of mitophagy. Following hypoxia, dephosphorylated at Tyr-18, leading to interaction with MAP1 LC3 family proteins and triggering mitophagy. Dephosphorylation is mediated by PGAM5. Phosphorylated by ULK1 at Ser-17 which enhances FUNDC1 binding to LC3. Post-translationally, ubiquitinated on Lys-119. Deubiquitinated by USP19; leading to hypoxia-induced DRP1 oligomerization and GTPase activity.

It is found in the mitochondrion outer membrane. Its function is as follows. Integral mitochondrial outer-membrane protein that mediates the formation of mitochondria-associated endoplasmic reticulum membranes (MAMs). In turn, mediates angiogenesis and neoangiogenesis through interference with intracellular Ca(2+) communication and regulation of the vascular endothelial growth factor receptor KDR/VEGFR2 expression at both mRNA and protein levels. Also acts as an activator of hypoxia-induced mitophagy, an important mechanism for mitochondrial quality and homeostasis, by interacting with and recruiting LC3 protein family to mitochondria. Mechanistically, recruits DRP1 at ER-mitochondria contact sites leading to DRP1 oligomerization and GTPase activity to facilitate mitochondrial fission during hypoxia. Additionally, plays a role in hepatic ferroptosis by interacting directly with glutathione peroxidase/GPX4 to facilitate its recruitment into mitochondria through TOM/TIM complex where it is degraded by mitophagy. The protein is FUN14 domain-containing protein 1 (FUNDC1) of Bos taurus (Bovine).